The sequence spans 138 residues: Small ribosomal subunit protein uS11 (138 aa).

2 disordered regions span residues 1–29 (MPPK…PHGA) and 117–138 (GAIS…RRRV). Positions 13-22 (KGQKTRRREK) are enriched in basic residues.

It belongs to the universal ribosomal protein uS11 family. In terms of assembly, part of the 30S ribosomal subunit. Interacts with proteins S7 and S18. Binds to IF-3.

Located on the platform of the 30S subunit, it bridges several disparate RNA helices of the 16S rRNA. Forms part of the Shine-Dalgarno cleft in the 70S ribosome. In Mycobacterium ulcerans (strain Agy99), this protein is Small ribosomal subunit protein uS11.